A 244-amino-acid polypeptide reads, in one-letter code: tRNA pseudouridine synthase A (244 aa).

Catalysis depends on D52, which acts as the Nucleophile. A substrate-binding site is contributed by Y110.

The protein belongs to the tRNA pseudouridine synthase TruA family. Homodimer.

The enzyme catalyses uridine(38/39/40) in tRNA = pseudouridine(38/39/40) in tRNA. In terms of biological role, formation of pseudouridine at positions 38, 39 and 40 in the anticodon stem and loop of transfer RNAs. The chain is tRNA pseudouridine synthase A from Clostridium botulinum (strain Eklund 17B / Type B).